Consider the following 120-residue polypeptide: Small ribosomal subunit protein bS6 (120 aa).

The protein belongs to the bacterial ribosomal protein bS6 family.

In terms of biological role, binds together with bS18 to 16S ribosomal RNA. In Blochmanniella floridana, this protein is Small ribosomal subunit protein bS6.